The sequence spans 105 residues: Small ribosomal subunit protein bS20 (105 aa).

This sequence belongs to the bacterial ribosomal protein bS20 family.

Binds directly to 16S ribosomal RNA. The chain is Small ribosomal subunit protein bS20 from Caldanaerobacter subterraneus subsp. tengcongensis (strain DSM 15242 / JCM 11007 / NBRC 100824 / MB4) (Thermoanaerobacter tengcongensis).